Consider the following 130-residue polypeptide: Methylglyoxal synthase (130 aa).

Residues 1–130 (MSTPRIALIA…DLARRLTANA (130 aa)) enclose the MGS-like domain. Residues His-11, Lys-15, 37 to 40 (TGTT), and 57 to 58 (SG) each bind substrate. The active-site Proton donor/acceptor is the Asp-63. His-90 provides a ligand contact to substrate.

The protein belongs to the methylglyoxal synthase family.

The catalysed reaction is dihydroxyacetone phosphate = methylglyoxal + phosphate. Its function is as follows. Catalyzes the formation of methylglyoxal from dihydroxyacetone phosphate. The chain is Methylglyoxal synthase from Burkholderia mallei (strain NCTC 10247).